A 419-amino-acid polypeptide reads, in one-letter code: 3-isopropylmalate dehydratase large subunit (419 aa).

[4Fe-4S] cluster is bound by residues Cys300, Cys360, and Cys363.

Belongs to the aconitase/IPM isomerase family. LeuC type 2 subfamily. In terms of assembly, heterodimer of LeuC and LeuD. [4Fe-4S] cluster is required as a cofactor.

The catalysed reaction is (2R,3S)-3-isopropylmalate = (2S)-2-isopropylmalate. It participates in amino-acid biosynthesis; L-leucine biosynthesis; L-leucine from 3-methyl-2-oxobutanoate: step 2/4. Functionally, catalyzes the isomerization between 2-isopropylmalate and 3-isopropylmalate, via the formation of 2-isopropylmaleate. This chain is 3-isopropylmalate dehydratase large subunit, found in Nitratidesulfovibrio vulgaris (strain DP4) (Desulfovibrio vulgaris).